A 100-amino-acid chain; its full sequence is Aspartyl/glutamyl-tRNA(Asn/Gln) amidotransferase subunit C (100 aa).

Belongs to the GatC family. In terms of assembly, heterotrimer of A, B and C subunits.

It catalyses the reaction L-glutamyl-tRNA(Gln) + L-glutamine + ATP + H2O = L-glutaminyl-tRNA(Gln) + L-glutamate + ADP + phosphate + H(+). The enzyme catalyses L-aspartyl-tRNA(Asn) + L-glutamine + ATP + H2O = L-asparaginyl-tRNA(Asn) + L-glutamate + ADP + phosphate + 2 H(+). Allows the formation of correctly charged Asn-tRNA(Asn) or Gln-tRNA(Gln) through the transamidation of misacylated Asp-tRNA(Asn) or Glu-tRNA(Gln) in organisms which lack either or both of asparaginyl-tRNA or glutaminyl-tRNA synthetases. The reaction takes place in the presence of glutamine and ATP through an activated phospho-Asp-tRNA(Asn) or phospho-Glu-tRNA(Gln). In Novosphingobium aromaticivorans (strain ATCC 700278 / DSM 12444 / CCUG 56034 / CIP 105152 / NBRC 16084 / F199), this protein is Aspartyl/glutamyl-tRNA(Asn/Gln) amidotransferase subunit C.